A 227-amino-acid chain; its full sequence is Cytochrome c oxidase subunit 2 (227 aa).

At 1 to 14 (MAHPMQLGFQDAAS) the chain is on the mitochondrial intermembrane side. The helical transmembrane segment at 15–45 (PIMEELLYFHDHTLMIVFMISSLVLYIISLM) threads the bilayer. The Mitochondrial matrix portion of the chain corresponds to 46 to 59 (LSTELTHTSTMDAQ). A helical transmembrane segment spans residues 60 to 87 (EVETVWTILPAVILILIALPSLRILYMM). At 88–227 (DEINTPSMTL…YFEEWLLKSL (140 aa)) the chain is on the mitochondrial intermembrane side. Cu cation-binding residues include His161, Cys196, Glu198, Cys200, His204, and Met207. Glu198 provides a ligand contact to Mg(2+). A Phosphotyrosine modification is found at Tyr218.

Belongs to the cytochrome c oxidase subunit 2 family. Component of the cytochrome c oxidase (complex IV, CIV), a multisubunit enzyme composed of 14 subunits. The complex is composed of a catalytic core of 3 subunits MT-CO1, MT-CO2 and MT-CO3, encoded in the mitochondrial DNA, and 11 supernumerary subunits COX4I, COX5A, COX5B, COX6A, COX6B, COX6C, COX7A, COX7B, COX7C, COX8 and NDUFA4, which are encoded in the nuclear genome. The complex exists as a monomer or a dimer and forms supercomplexes (SCs) in the inner mitochondrial membrane with NADH-ubiquinone oxidoreductase (complex I, CI) and ubiquinol-cytochrome c oxidoreductase (cytochrome b-c1 complex, complex III, CIII), resulting in different assemblies (supercomplex SCI(1)III(2)IV(1) and megacomplex MCI(2)III(2)IV(2)). Found in a complex with TMEM177, COA6, COX18, COX20, SCO1 and SCO2. Interacts with TMEM177 in a COX20-dependent manner. Interacts with COX20. Interacts with COX16. It depends on Cu cation as a cofactor.

It localises to the mitochondrion inner membrane. The enzyme catalyses 4 Fe(II)-[cytochrome c] + O2 + 8 H(+)(in) = 4 Fe(III)-[cytochrome c] + 2 H2O + 4 H(+)(out). Its function is as follows. Component of the cytochrome c oxidase, the last enzyme in the mitochondrial electron transport chain which drives oxidative phosphorylation. The respiratory chain contains 3 multisubunit complexes succinate dehydrogenase (complex II, CII), ubiquinol-cytochrome c oxidoreductase (cytochrome b-c1 complex, complex III, CIII) and cytochrome c oxidase (complex IV, CIV), that cooperate to transfer electrons derived from NADH and succinate to molecular oxygen, creating an electrochemical gradient over the inner membrane that drives transmembrane transport and the ATP synthase. Cytochrome c oxidase is the component of the respiratory chain that catalyzes the reduction of oxygen to water. Electrons originating from reduced cytochrome c in the intermembrane space (IMS) are transferred via the dinuclear copper A center (CU(A)) of subunit 2 and heme A of subunit 1 to the active site in subunit 1, a binuclear center (BNC) formed by heme A3 and copper B (CU(B)). The BNC reduces molecular oxygen to 2 water molecules using 4 electrons from cytochrome c in the IMS and 4 protons from the mitochondrial matrix. The protein is Cytochrome c oxidase subunit 2 (MT-CO2) of Nycticebus coucang (Slow loris).